A 293-amino-acid polypeptide reads, in one-letter code: MTDSTRSLRNCLAPAKLNLFLHITGRRPNGYHDLQSVFQLLNWGDTLHFTLRDDGRVARVTDVPGVPEESDLVVRAANLLKTHTGTAHGVDIEIDKILPMGAGLGGGSSDAATTLLALNRLWQLDLPRAELQSLAVKLGADVPFFIFGKNAFAEGIGEELAEVQLPTRWFLVVTPRVHVPTAEIFSDELLTRDTKPVTIADFLAQQTSDAGWPDSFGRNDMQEVVTRKYAEVAQVVKWLYDVTPARMTGSGASVFAAFHSKHEAEAAKAKLPASWNGAVAESLNEHPLFTFAS.

Lys-16 is an active-site residue. Residue 99 to 109 (PMGAGLGGGSS) participates in ATP binding. Asp-141 is an active-site residue.

This sequence belongs to the GHMP kinase family. IspE subfamily.

The enzyme catalyses 4-CDP-2-C-methyl-D-erythritol + ATP = 4-CDP-2-C-methyl-D-erythritol 2-phosphate + ADP + H(+). It functions in the pathway isoprenoid biosynthesis; isopentenyl diphosphate biosynthesis via DXP pathway; isopentenyl diphosphate from 1-deoxy-D-xylulose 5-phosphate: step 3/6. Catalyzes the phosphorylation of the position 2 hydroxy group of 4-diphosphocytidyl-2C-methyl-D-erythritol. The sequence is that of 4-diphosphocytidyl-2-C-methyl-D-erythritol kinase from Burkholderia cenocepacia (strain ATCC BAA-245 / DSM 16553 / LMG 16656 / NCTC 13227 / J2315 / CF5610) (Burkholderia cepacia (strain J2315)).